Reading from the N-terminus, the 486-residue chain is UDP-N-acetylmuramate--L-alanine ligase (486 aa).

126 to 132 is an ATP binding site; the sequence is GTHGKTS.

Belongs to the MurCDEF family.

It localises to the cytoplasm. The enzyme catalyses UDP-N-acetyl-alpha-D-muramate + L-alanine + ATP = UDP-N-acetyl-alpha-D-muramoyl-L-alanine + ADP + phosphate + H(+). It functions in the pathway cell wall biogenesis; peptidoglycan biosynthesis. Functionally, cell wall formation. This Corynebacterium glutamicum (strain R) protein is UDP-N-acetylmuramate--L-alanine ligase.